Consider the following 1737-residue polypeptide: Complement C4 (1737 aa).

Positions 1–19 are cleaved as a signal peptide; that stretch reads MRLLWGLAWAFSFFASSLQ. Cys66 and Cys95 form a disulfide bridge. 2 N-linked (GlcNAc...) asparagine glycosylation sites follow: Asn224 and Asn664. A disulfide bond links Cys633 and Cys667. A propeptide spanning residues 674-677 is cleaved from the precursor; the sequence is RQKR. Disulfide bonds link Cys700–Cys726, Cys701–Cys733, and Cys714–Cys734. The Anaphylatoxin-like domain occupies 700–734; the sequence is CCQDGMTKLPMARTCEQRAARVPQPACREPFLSCC. Residue Asn743 is glycosylated (N-linked (GlcNAc...) asparagine). Residues 1005 to 1008 constitute a cross-link (isoglutamyl cysteine thioester (Cys-Gln)); sequence CAEQ. N-linked (GlcNAc...) asparagine glycans are attached at residues Asn1323 and Asn1386. Sulfotyrosine occurs at positions 1412, 1414, and 1416. The propeptide occupies 1443-1446; it reads RRRR. Disulfide bonds link Cys1464/Cys1528, Cys1576/Cys1581, Cys1588/Cys1666, Cys1611/Cys1735, and Cys1711/Cys1720. In terms of domain architecture, NTR spans 1588 to 1735; the sequence is CPRQRRSLER…FLQEYSSQGC (148 aa). Tyr1676 bears the Sulfotyrosine mark.

In terms of assembly, in absence of complement activation, circulates in blood as a disulfide-linked trimer of an alpha, beta and gamma chain. Complement C4b is composed of complement C4b-A, complement C4 beta and complement C4 gamma chains that are associated via disulfide bonds. Non-enzymatic component of the C3 convertase, also named C4bC2b, composed of the serine protease complement C2b (C2), as well as complement C4b. Non-enzymatic component of the C5 convertase, also named C4bC2bC3b, composed of the serine protease complement C2b (C2), complement C3b, as well as complement C4b. Post-translationally, prior to secretion, the single-chain precursor is enzymatically cleaved by plasminogen (PLG) to yield non-identical chains alpha, beta and gamma. During activation of the complement systems, the alpha chain is cleaved into C4a and C4b by different proteases depending on the complement pathway: C4b stays linked to the beta and gamma chains, while C4a is released in the plasma. The alpha chain is cleaved by C1S to generate C4a and C4b following activation by the classical complement system. The alpha chain is cleaved to generate C4a and C4b by MASP2 following activation by the lectin complement system. The alpha chain is cleaved by GZMK to generate C4a and C4b following activation by the GZMK complement system. Further degradation of C4b by C1 into the inactive fragments C4c and C4d blocks the generation of C3 convertase. The proteolytic cleavages often are incomplete so that many structural forms can be found in plasma. In terms of processing, upon activation, the internal thioester bond reacts with carbohydrate antigens on the target surface to form amide or ester bonds, leading to covalent association with the surface of pathogens. Complement C4b interacts with complement C3b via a thioester linkage. Post-translationally, N- and O-glycosylated. O-glycosylated with a core 1 or possibly core 8 glycan.

It localises to the secreted. The protein localises to the cell surface. Functionally, precursor of non-enzymatic components of the classical, lectin and GZMK complement pathways, which consist in a cascade of proteins that leads to phagocytosis and breakdown of pathogens and signaling that strengthens the adaptive immune system. Its function is as follows. Non-enzymatic component of C3 and C5 convertases. Generated following cleavage by complement proteases (C1S, MASP2 or GZMK, depending on the complement pathway), it covalently attaches to the surface of pathogens, where it acts as an opsonin that marks the surface of antigens for removal. It then recruits the serine protease complement C2b to form the C3 and C5 convertases, which cleave and activate C3 and C5, respectively, the next components of the complement pathways. Complement C4b-A isotype is responsible for effective binding to form amide bonds with immune aggregates or protein antigens, while complement C4b-B isotype catalyzes the transacylation of the thioester carbonyl group to form ester bonds with carbohydrate antigens. Putative humoral mediator released following cleavage by complement proteases (C1S, MASP2 or GZMK, depending on the complement pathway). While it is strongly similar to anaphylatoxins, its role is unclear. Was reported to act as a mediator of local inflammatory process; however these effects were probably due to contamination with C3a and/C5a anaphylatoxins in biological assays. The sequence is that of Complement C4 from Rattus norvegicus (Rat).